The following is a 507-amino-acid chain: E3 ubiquitin-protein ligase makorin-3 (507 aa).

The segment covering 1–21 (MEEPAAPSEAHEAAGAQAGAE) has biased composition (low complexity). Disordered regions lie at residues 1-48 (MEEP…DSAL) and 69-89 (RGGL…PLPS). Residues 95–122 (WTKQIICRYYIHGQCKEGENCRYSHDLS) form a C3H1-type 1 zinc finger. The tract at residues 126-149 (MATEGGVSPPGASAGGGPSTAAHI) is disordered. The segment at 238-265 (GSGLRFCYYASRGVCFRGESCMYLHGDI) adopts a C3H1-type 2 zinc-finger fold. The tract at residues 266–293 (CDMCGLQTLHPMDAAQREEHMRACIEAH) is makorin-type Cys-His. The segment at 311-365 (CGICMEVVYEKANPNDRRFGILSNCNHSFCIRCIRRWRSARQFENRIVKSCPQCR) adopts an RING-type zinc-finger fold. A C3H1-type 3 zinc finger spans residues 394–423 (AMSNKACRYFAEGRGNCPFGDTCFYKHEYP).

As to expression, ubiquitous.

The protein resides in the nucleus. The catalysed reaction is S-ubiquitinyl-[E2 ubiquitin-conjugating enzyme]-L-cysteine + [acceptor protein]-L-lysine = [E2 ubiquitin-conjugating enzyme]-L-cysteine + N(6)-ubiquitinyl-[acceptor protein]-L-lysine.. Its pathway is protein modification; protein ubiquitination. E3 ubiquitin ligase catalyzing the covalent attachment of ubiquitin moieties onto substrate proteins. Acts as a key developmental timer that helps ensure puberty begins at the appropriate age, by inhibiting premature activation of the reproductive hormone cascade. Epigenetically regulates GNRH1 transcription by disrupting the binding of methyl-DNA binding protein 3/MBD3 to the promoter of GNRH1. Mechanistically, mediates the non-proteolytic ubiquitination of MBD3 at multiple sites with 'Lys27' ubiquitin linkages and thereby regulates the methylation status of the genome, including GNRH1 promoter. Modulates the stability and translation of GNRH1 mRNA by mediating the non-proteolytic ubiquitination of PABP family members PABPC1, PABPC3 and PABPC4 at multiple sites. Also participates in the maintenance of genomic and epigenomic stability by regulating the abundance of APEX2 via 'Lys-48'-linked ubiquitination. This chain is E3 ubiquitin-protein ligase makorin-3 (MKRN3), found in Homo sapiens (Human).